The following is a 441-amino-acid chain: EP1-like glycoprotein 3 (441 aa).

An N-terminal signal peptide occupies residues 1–22 (MKFSITLALCFTLSIFLIGSQA). The 131-residue stretch at 29–159 (QFRVVNEGGY…SGKFVWQSFD (131 aa)) folds into the Bulb-type lectin domain. Residues Asn-102, Asn-258, and Asn-269 are each glycosylated (N-linked (GlcNAc...) asparagine). A WD repeat occupies 254–296 (GSKFNVSTFLSRPKHNATLSFIRLESDGNIRVWSYSTLATSTA). The PAN domain occupies 356-433 (CDPKTFHYFK…SSLVAYVKAP (78 aa)). 2 cysteine pairs are disulfide-bonded: Cys-387-Cys-409 and Cys-391-Cys-397.

Phosphorylated on tyrosine.

It localises to the secreted. It is found in the cell wall. Its function is as follows. May be involved in a cell-to cell programmed cell death (PCD) signaling mechanism. The sequence is that of EP1-like glycoprotein 3 from Arabidopsis thaliana (Mouse-ear cress).